The sequence spans 153 residues: Glutamyl-tRNA(Gln) amidotransferase subunit C, mitochondrial (153 aa).

The segment at 31–55 is disordered; the sequence is HPTKVPQQPEPNAFPDLDNNTDDDP.

This sequence belongs to the GatC family. In terms of assembly, subunit of the heterotrimeric GatCAB amidotransferase (AdT) complex, composed of A, B and C subunits.

The protein localises to the mitochondrion. The enzyme catalyses L-glutamyl-tRNA(Gln) + L-glutamine + ATP + H2O = L-glutaminyl-tRNA(Gln) + L-glutamate + ADP + phosphate + H(+). Functionally, allows the formation of correctly charged Gln-tRNA(Gln) through the transamidation of misacylated Glu-tRNA(Gln) in the mitochondria. The reaction takes place in the presence of glutamine and ATP through an activated gamma-phospho-Glu-tRNA(Gln). In Drosophila willistoni (Fruit fly), this protein is Glutamyl-tRNA(Gln) amidotransferase subunit C, mitochondrial.